The chain runs to 244 residues: SURF1-like protein (244 aa).

2 consecutive transmembrane segments (helical) span residues 7–23 (ILTTFIILTSLGFWQLS) and 201–219 (YAITWFGLAIFLIVIYVIY).

Belongs to the SURF1 family.

The protein localises to the cell membrane. The protein is SURF1-like protein of Rickettsia prowazekii (strain Madrid E).